The following is a 305-amino-acid chain: MARYKGLSILSLFAVFSSLASAELDCSNIKVDGVMWNFGKLGGAHSISETASSHEGYNTTYTLDICKPLTKTLCKKGAFVCAVRNATDINGIERTMDVIDIAGNFVLNSGRTLDPIFTRLKKEDPKTEGLKMELHGGKHKFGNLLKRQKAVITLLCDRERTGLEGLESPKPDGDKKKDGEKKDDDKKDNKDKEGKSKRDGEENKRSLIFKSYNEEEGTLDLEWKTKYACENVEDGGSAPSGHWGFFTWVIVLYVVLVSLPLLSERVTNVRCHSQPVPVHFGLSDIRLVAQLQPVWSSRVGLASSQ.

A signal peptide spans 1–22 (MARYKGLSILSLFAVFSSLASA). Over 23–242 (ELDCSNIKVD…EDGGSAPSGH (220 aa)) the chain is Lumenal. The MRH domain occupies 24–231 (LDCSNIKVDG…EWKTKYACEN (208 aa)). Intrachain disulfides connect cysteine 26–cysteine 66 and cysteine 74–cysteine 81. N-linked (GlcNAc...) asparagine glycosylation is present at asparagine 58. An N-linked (GlcNAc...) asparagine glycan is attached at asparagine 85. Residues cysteine 156 and cysteine 229 are joined by a disulfide bond. The disordered stretch occupies residues 163–202 (LEGLESPKPDGDKKKDGEKKDDDKKDNKDKEGKSKRDGEE). A helical membrane pass occupies residues 243 to 263 (WGFFTWVIVLYVVLVSLPLLS). Residues 264–305 (ERVTNVRCHSQPVPVHFGLSDIRLVAQLQPVWSSRVGLASSQ) are Cytoplasmic-facing.

This sequence belongs to the ATG27 family.

It is found in the cytoplasmic vesicle membrane. The protein localises to the golgi apparatus membrane. Its subcellular location is the mitochondrion membrane. The protein resides in the preautophagosomal structure membrane. Its function is as follows. Effector of phosphatidylinositol 3-phosphate kinase signaling. Regulates the cytoplasm to vacuole transport (Cvt) vesicle formation. Plays a role in ATG protein retrieval from the pre-autophagosomal structure (PAS). This chain is Autophagy-related protein 27, found in Arthroderma benhamiae (strain ATCC MYA-4681 / CBS 112371) (Trichophyton mentagrophytes).